The following is a 291-amino-acid chain: tRNA dimethylallyltransferase (291 aa).

Position 17–24 (17–24 (GPTASGKS)) interacts with ATP. 19 to 24 (TASGKS) contacts substrate.

This sequence belongs to the IPP transferase family. As to quaternary structure, monomer. Mg(2+) serves as cofactor.

It carries out the reaction adenosine(37) in tRNA + dimethylallyl diphosphate = N(6)-dimethylallyladenosine(37) in tRNA + diphosphate. Catalyzes the transfer of a dimethylallyl group onto the adenine at position 37 in tRNAs that read codons beginning with uridine, leading to the formation of N6-(dimethylallyl)adenosine (i(6)A). The chain is tRNA dimethylallyltransferase from Cereibacter sphaeroides (strain ATCC 17025 / ATH 2.4.3) (Rhodobacter sphaeroides).